Here is a 346-residue protein sequence, read N- to C-terminus: tRNA N6-adenosine threonylcarbamoyltransferase (346 aa).

Fe cation is bound by residues histidine 111 and histidine 115. Residues leucine 134–glycine 138, aspartate 167, glycine 180, and asparagine 279 each bind substrate. Residue aspartate 307 coordinates Fe cation.

The protein belongs to the KAE1 / TsaD family. It depends on Fe(2+) as a cofactor.

Its subcellular location is the cytoplasm. It carries out the reaction L-threonylcarbamoyladenylate + adenosine(37) in tRNA = N(6)-L-threonylcarbamoyladenosine(37) in tRNA + AMP + H(+). In terms of biological role, required for the formation of a threonylcarbamoyl group on adenosine at position 37 (t(6)A37) in tRNAs that read codons beginning with adenine. Is involved in the transfer of the threonylcarbamoyl moiety of threonylcarbamoyl-AMP (TC-AMP) to the N6 group of A37, together with TsaE and TsaB. TsaD likely plays a direct catalytic role in this reaction. This chain is tRNA N6-adenosine threonylcarbamoyltransferase, found in Burkholderia ambifaria (strain ATCC BAA-244 / DSM 16087 / CCUG 44356 / LMG 19182 / AMMD) (Burkholderia cepacia (strain AMMD)).